The chain runs to 338 residues: Solute-binding protein Rfer_1840 (338 aa).

The first 25 residues, 1–25 (MQRRQLLQSMGGLAASTMPFSLAFA), serve as a signal peptide directing secretion. Residues Arg47, Tyr100, Arg175, Ser197, 214–218 (TSSTS), and Glu244 each bind malonate.

Belongs to the bacterial solute-binding protein 7 family. As to quaternary structure, the complex is comprised of an extracytoplasmic solute-binding protein and a heteromeric permease formed by two transmembrane proteins.

It is found in the periplasm. Its function is as follows. Solute-binding protein that binds malonate (in vitro). Probably part of a tripartite ATP-independent periplasmic (TRAP) transport system that mediates solute transport into the cytoplasm. The polypeptide is Solute-binding protein Rfer_1840 (Albidiferax ferrireducens (strain ATCC BAA-621 / DSM 15236 / T118) (Rhodoferax ferrireducens)).